The following is a 1368-amino-acid chain: DNA-directed RNA polymerase subunit beta (1368 aa).

The protein belongs to the RNA polymerase beta chain family. The RNAP catalytic core consists of 2 alpha, 1 beta, 1 beta' and 1 omega subunit. When a sigma factor is associated with the core the holoenzyme is formed, which can initiate transcription.

It carries out the reaction RNA(n) + a ribonucleoside 5'-triphosphate = RNA(n+1) + diphosphate. DNA-dependent RNA polymerase catalyzes the transcription of DNA into RNA using the four ribonucleoside triphosphates as substrates. In Paraburkholderia xenovorans (strain LB400), this protein is DNA-directed RNA polymerase subunit beta.